The primary structure comprises 632 residues: Arginine--tRNA ligase (632 aa).

Residues 129-139 (ANPVHPLHVGS) carry the 'HIGH' region motif.

The protein belongs to the class-I aminoacyl-tRNA synthetase family.

The protein localises to the cytoplasm. It catalyses the reaction tRNA(Arg) + L-arginine + ATP = L-arginyl-tRNA(Arg) + AMP + diphosphate. The protein is Arginine--tRNA ligase of Korarchaeum cryptofilum (strain OPF8).